The chain runs to 40 residues: Competence and sporulation stimulating factor (40 aa).

Positions 1–35 (MKLKSKLFVICLAAAAIFTAAGVSANAEALDFHVT) are excised as a propeptide.

It belongs to the Phr family. In terms of assembly, interacts with RapC and inhibits its interaction with ComA. Post-translationally, secreted with a propeptide domain, which is cleaved in the cell wall by the secreted serine proteases subtilisin, Epr and Vpr to produce a mature signaling peptide. Contains a predicted signal peptide cleavage site in the N-terminal region, however the propeptide is probably subject to only one processing event, at the N-terminal end of the mature peptide.

It is found in the secreted. Its subcellular location is the cytoplasm. The protein localises to the host cell. In terms of biological role, signaling molecule that serves as a cell density signal for both genetic competence development and sporulation. Secreted during production, but the mature peptide acts intracellularly, indicating that it needs to be imported into the cell to function. At low concentrations, CSF stimulates expression of the genes controlled by ComA, a transcriptional factor that regulates the development of genetic competence. It includes the srfA operon, which encodes a small protein, ComS, required for competence development, and the surfactin biosynthetic enzymes. Acts by inhibiting RapC, which regulates the activity of ComA. At high concentrations, it inhibits expression of those same ComA-controlled genes, maybe by inhibiting activity of the kinase ComP. In addition, high concentrations of CSF can stimulate sporulation under some conditions. Also inhibits RapB activity, with lower efficiency, but does not act on RapA. Is probably involved in the quorum sensing control of sporulation. CSF is a species-specific signaling molecule that partially compensates for the lack of ComX-mediated communication between different strains of B.subtilis. Its function is as follows. B.subtilis is a well-characterized soil and water saprophyte, but it is also found in enteric flora of many species, including humans. In this environment, CSF can be transported into human intestinal epithelia via OCTN2, a host cell membrane transporter, and can induce cytoprotective heat shock proteins contributing to intestinal homeostasis. Functionally, in addition, in non-domesticated swarming strains of B.subtilis, the residual propeptide exposed on the exterior of the cytoplasmic membrane may have an extracellular role in swarming. This function is probably not dependent on CSF. This Bacillus subtilis (strain 168) protein is Competence and sporulation stimulating factor.